The following is a 1317-amino-acid chain: Putative late blight resistance protein homolog R1B-14 (1317 aa).

Coiled-coil stretches lie at residues 419-442 (RYSD…ESLQ) and 535-556 (RMNE…RLLN). Positions 521 to 823 (TVITHTSSQL…SESFIKSSEG (303 aa)) constitute an NB-ARC domain. 568 to 575 (GMPGLGKT) is an ATP binding site. LRR repeat units lie at residues 944–968 (FKFL…LFYL), 987–1015 (LWNL…IWDM), 1090–1114 (PIRL…ISAP), 1138–1161 (LKHL…KVSN), 1164–1186 (FPQL…ADDA), and 1187–1211 (FPNL…FMDI). The region spanning 1251–1317 (IKKMVLKFDI…VSKLRKRGML (67 aa)) is the HMA domain.

This sequence belongs to the disease resistance NB-LRR family.

Its subcellular location is the cytoplasm. The protein localises to the membrane. Functionally, confers resistance to late blight (Phytophthora infestans) races carrying the avirulence gene Avr1. Resistance proteins guard the plant against pathogens that contain an appropriate avirulence protein via an indirect interaction with this avirulence protein. That triggers a defense system including the hypersensitive response, which restricts the pathogen growth. The sequence is that of Putative late blight resistance protein homolog R1B-14 (R1B-14) from Solanum demissum (Wild potato).